A 678-amino-acid chain; its full sequence is MDRDTEAGSNDGTNDNNDTTIPPHTPESNIEAVDHVPPVPRRPSPKLSDDGASGALHVAAASRPTTQVSTIDISTLSFPDGSRGTFSTSATSATSATSATRSVASPQSSASGYTSPRTDLVETVSVASYPATLRPPGDLADLVTGEFNRRSRAWSMLRTQSSSVQPFEASRTGACDSLTGFEKEFDNIPELGEKGITDEQRLSLWKSKMKHYMILSSAGKPIWSRHGDTSLINSYMGVVQTIISFYEGAKDPLLGFTAGNARFVISTQGPLYFVAISRLGESDAQLRSQLDALYMQILSTLTLPTLKNIFVHRPSTDLRKPLEGTESLLSSLADSFTKGSPSALLGALECLRLRKSHRATINNAFLKCRSDKLLYGLIVAGGKLVSVIRPRKHSLHPSDLQLIFNMLFESGGIRAGGGENWVPLCLPAFNNRGYLYMYVSFFDSVETAEENNSNNTNNPEQPPQPPPPKPVTSPDEEIAIILISADKESFFELKSMRDKLALQLAKNGSLALIQSAARQGRPRIETILNTKPLSKEAGQGQGQGQLSHFLYKSRANVQFCQSSLSPAFETSSPPLPSSSPSENGSSQKTTEKLVSRRRLMTLYHHLHASIHAKHSHLKVLHLVSEDAASLAWITPVFEFYCVAGPNMSSGIMTQCANKVVQWAKREEERLFIIGGGVF.

3 disordered regions span residues 1–116, 449–474, and 568–591; these read MDRD…YTSP, EENN…VTSP, and FETS…KTTE. Low complexity predominate over residues 10–20; the sequence is NDGTNDNNDTT. Residues 63 to 77 are compositionally biased toward polar residues; sequence RPTTQVSTIDISTLS. Positions 87–105 are enriched in low complexity; the sequence is STSATSATSATSATRSVAS. The span at 106 to 116 shows a compositional bias: polar residues; that stretch reads PQSSASGYTSP. Low complexity predominate over residues 450 to 459; the sequence is ENNSNNTNNP. Residues 460–471 are compositionally biased toward pro residues; it reads EQPPQPPPPKPV.

The protein belongs to the MON1/SAND family.

It localises to the endosome. It is found in the multivesicular body membrane. Its subcellular location is the prevacuolar compartment membrane. The protein localises to the vacuole membrane. In terms of biological role, in complex with CCZ1, is required for multiple vacuole delivery pathways including the cytoplasm to vacuole transport (Cvt), autophagy, pexophagy and endocytosis. The MON1-CCZ1 complex acts at the fusion of vesicles with the vacuole, through its regulation of the SNARE complex during the coordinated priming and docking stages of fusion, and particularly at the stage of tethering/docking. The protein is Vacuolar fusion protein mon1 (apg-13) of Neurospora crassa (strain ATCC 24698 / 74-OR23-1A / CBS 708.71 / DSM 1257 / FGSC 987).